Reading from the N-terminus, the 82-residue chain is Cytochrome b559 subunit alpha (82 aa).

The helical transmembrane segment at 22–36 (IIHAVTLPAIFIAGF) threads the bilayer. His-24 is a binding site for heme.

Belongs to the PsbE/PsbF family. As to quaternary structure, heterodimer of an alpha subunit and a beta subunit. PSII is composed of 1 copy each of membrane proteins PsbA, PsbB, PsbC, PsbD, PsbE, PsbF, PsbH, PsbI, PsbJ, PsbK, PsbL, PsbM, PsbT, PsbX, PsbY, Psb30/Ycf12, peripheral proteins PsbO, CyanoQ (PsbQ), PsbU, PsbV and a large number of cofactors. It forms dimeric complexes. It depends on heme b as a cofactor.

Its subcellular location is the cellular thylakoid membrane. This b-type cytochrome is tightly associated with the reaction center of photosystem II (PSII). PSII is a light-driven water:plastoquinone oxidoreductase that uses light energy to abstract electrons from H(2)O, generating O(2) and a proton gradient subsequently used for ATP formation. It consists of a core antenna complex that captures photons, and an electron transfer chain that converts photonic excitation into a charge separation. This chain is Cytochrome b559 subunit alpha, found in Prochlorococcus marinus (strain MIT 9515).